Here is a 399-residue protein sequence, read N- to C-terminus: Galactokinase (399 aa).

E42–D45 contributes to the substrate binding site. Residues S76 and A133–S139 contribute to the ATP site. 2 residues coordinate Mg(2+): S139 and E171. D183 functions as the Proton acceptor in the catalytic mechanism. Y233 serves as a coordination point for substrate.

The protein belongs to the GHMP kinase family. GalK subfamily. Monomer.

Its subcellular location is the cytoplasm. It carries out the reaction alpha-D-galactose + ATP = alpha-D-galactose 1-phosphate + ADP + H(+). Its pathway is carbohydrate metabolism; galactose metabolism. Its function is as follows. Catalyzes the transfer of the gamma-phosphate of ATP to D-galactose to form alpha-D-galactose-1-phosphate (Gal-1-P). This chain is Galactokinase, found in Lactococcus lactis subsp. lactis (strain IL1403) (Streptococcus lactis).